A 340-amino-acid polypeptide reads, in one-letter code: Entry-fusion complex protein OPG094 (340 aa).

Residues 1–20 (MGGGVSVELPKRDPPPGVPT) are disordered. Gly-2 carries N-myristoyl glycine; by host lipidation. At 2–319 (GGGVSVELPK…VQHNIKHSFD (318 aa)) the chain is on the virion surface side. Residues 320 to 340 (LKLHLISLLSLLVIWILIVAI) traverse the membrane as a helical; Signal-anchor for type II membrane protein segment.

This sequence belongs to the orthopoxvirus OPG086 family. Interacts with OPG143. Component of the entry fusion complex (EFC) composed of OPG053, OPG076, OPG086, OPG094, OPG095, OPG099, OPG107, OPG143, OPG104, OPG147 and OPG155. Except for OPG095 and OPG053, each of the EFC proteins is required for assembly or stability of the complex. In terms of processing, unglycosylated because produced in viral factories instead of the classic ER -Golgi route.

It is found in the virion membrane. Its function is as follows. Component of the entry fusion complex (EFC), which consists of 11 proteins. During cell infection, this complex mediates entry of the virion core into the host cytoplasm by a two-step mechanism consisting of lipid mixing of the viral and cellular membranes and subsequent pore formation. The protein is Entry-fusion complex protein OPG094 (OPG094) of Cynomys gunnisoni (Gunnison's prairie dog).